The following is a 150-amino-acid chain: Deoxyuridine 5'-triphosphate nucleotidohydrolase (150 aa).

Substrate-binding positions include 69-71 (RSG), N82, 86-88 (LID), and M96.

This sequence belongs to the dUTPase family. Mg(2+) is required as a cofactor.

It catalyses the reaction dUTP + H2O = dUMP + diphosphate + H(+). Its pathway is pyrimidine metabolism; dUMP biosynthesis; dUMP from dCTP (dUTP route): step 2/2. Functionally, this enzyme is involved in nucleotide metabolism: it produces dUMP, the immediate precursor of thymidine nucleotides and it decreases the intracellular concentration of dUTP so that uracil cannot be incorporated into DNA. The sequence is that of Deoxyuridine 5'-triphosphate nucleotidohydrolase from Leptothrix cholodnii (strain ATCC 51168 / LMG 8142 / SP-6) (Leptothrix discophora (strain SP-6)).